The primary structure comprises 308 residues: Mycothiol acetyltransferase (308 aa).

The segment at 1–20 (MTSDDTAQPSGARRIETRPD) is disordered. N-acetyltransferase domains follow at residues 15–152 (IETR…RSLT) and 165–308 (VTVR…RSET). 1D-myo-inositol 2-(L-cysteinylamino)-2-deoxy-alpha-D-glucopyranoside is bound at residue Glu47. 91 to 93 (LVV) contacts acetyl-CoA. 1D-myo-inositol 2-(L-cysteinylamino)-2-deoxy-alpha-D-glucopyranoside-binding residues include Glu192, Lys231, and Glu240. Residues 244-246 (VGV) and 251-257 (QGGGLGK) contribute to the acetyl-CoA site. Tyr278 is a 1D-myo-inositol 2-(L-cysteinylamino)-2-deoxy-alpha-D-glucopyranoside binding site.

This sequence belongs to the acetyltransferase family. MshD subfamily. Monomer.

It catalyses the reaction 1D-myo-inositol 2-(L-cysteinylamino)-2-deoxy-alpha-D-glucopyranoside + acetyl-CoA = mycothiol + CoA + H(+). Its function is as follows. Catalyzes the transfer of acetyl from acetyl-CoA to desacetylmycothiol (Cys-GlcN-Ins) to form mycothiol. The chain is Mycothiol acetyltransferase from Streptomyces scabiei (strain 87.22).